A 475-amino-acid chain; its full sequence is Probable pectate lyase 7 (475 aa).

A signal peptide spans 1–24 (METARLFKLVCVICIASLIPTIRA). Residues Asn67 and Asn96 are each glycosylated (N-linked (GlcNAc...) asparagine). Residues 91–117 (ISSPTNSTRRSLTGRGKGKGKGKWSKL) form a disordered region. Ca(2+) contacts are provided by Asp271, Asp295, and Asp299. Residue Arg351 is part of the active site.

It belongs to the polysaccharide lyase 1 family. Ca(2+) is required as a cofactor.

It catalyses the reaction Eliminative cleavage of (1-&gt;4)-alpha-D-galacturonan to give oligosaccharides with 4-deoxy-alpha-D-galact-4-enuronosyl groups at their non-reducing ends.. It participates in glycan metabolism; pectin degradation; 2-dehydro-3-deoxy-D-gluconate from pectin: step 2/5. This is Probable pectate lyase 7 from Arabidopsis thaliana (Mouse-ear cress).